Consider the following 331-residue polypeptide: UDP-N-acetylenolpyruvoylglucosamine reductase (331 aa).

Residues Arg54–Gly221 form the FAD-binding PCMH-type domain. Arg200 is an active-site residue. The active-site Proton donor is Ser251. Residue Glu321 is part of the active site.

This sequence belongs to the MurB family. Requires FAD as cofactor.

The protein resides in the cytoplasm. It carries out the reaction UDP-N-acetyl-alpha-D-muramate + NADP(+) = UDP-N-acetyl-3-O-(1-carboxyvinyl)-alpha-D-glucosamine + NADPH + H(+). It functions in the pathway cell wall biogenesis; peptidoglycan biosynthesis. Cell wall formation. In Trichormus variabilis (strain ATCC 29413 / PCC 7937) (Anabaena variabilis), this protein is UDP-N-acetylenolpyruvoylglucosamine reductase.